The sequence spans 720 residues: Capsid protein (720 aa).

2 disordered regions span residues 546 to 569 (GTQR…GPNF) and 616 to 691 (TEPS…RDRD). The span at 652-664 (PTDEDERYLEAEA) shows a compositional bias: acidic residues.

The protein belongs to the anelloviridae capsid protein family.

It is found in the virion. Functionally, self-assembles to form an icosahedral capsid with a T=1 symmetry, about 30 nm in diameter, and consisting of 60 capsid proteins. The capsid encapsulates the genomic DNA. Capsid protein is involved in attachment and entry into the host cell. This Torque teno douroucouli virus (isolate At-TTV3) protein is Capsid protein.